We begin with the raw amino-acid sequence, 2564 residues long: Spectrin beta chain, non-erythrocytic 4 (2564 aa).

The tract at residues 1 to 37 (MAQVPGEVDNMEGLPAPNNNPAARWESPDRGWEREQP) is disordered. The tract at residues 1–282 (MAQVPGEVDN…IITYVVSFYH (282 aa)) is actin-binding. The span at 26–36 (ESPDRGWEREQ) shows a compositional bias: basic and acidic residues. Calponin-homology (CH) domains lie at 61–165 (AVQK…LRFQ) and 180–285 (RSAK…HYFS). Spectrin repeat units follow at residues 311 to 418 (IERY…AALR), 430 to 533 (LAQR…RLEQ), 536 to 641 (ALQK…AELE), 774 to 879 (ALHQ…WLRD), 884 to 982 (YRMF…RKEE), 1089 to 1196 (RLQR…EALV), 1306 to 1407 (ELQH…RQLF), 1412 to 1512 (ADQL…RLLL), 1515 to 1617 (KELH…QQVL), 1623 to 1725 (VEQY…ALEQ), 1728 to 1830 (WLYQ…AQLL), 1835 to 1935 (ELHK…EDAR), 1944 to 2046 (ALRF…WLQQ), and 2049 to 2123 (EVHQ…QSKQ). The interval 1853-1872 (KRRRLPRLTTPPEPRPSASS) is disordered. Positions 2208-2225 (PAAPEDAAETPATPAAAE) are enriched in low complexity. Disordered regions lie at residues 2208 to 2439 (PAAP…KSSN) and 2533 to 2564 (ARWGQTLPTTSSTDEGNPKREGGDRRASGRRK). 3 stretches are compositionally biased toward basic and acidic residues: residues 2227–2254 (VRPRPERQESADRAEELPRRRRPERQES), 2268–2278 (ERQESAEHEAA), and 2287–2318 (EQMERRRERRERRLERQESSEQEMPIRGDLVK). A compositionally biased stretch (pro residues) spans 2343–2355 (PSLPQPRELPPGR). 2 stretches are compositionally biased toward basic and acidic residues: residues 2362-2377 (LPERTPRPDRPRARDR) and 2424-2435 (FLLRKRELDANR). The PH domain maps to 2418–2527 (TVQHEGFLLR…WLEAVASSVA (110 aa)). The segment covering 2538–2547 (TLPTTSSTDE) has biased composition (polar residues). A compositionally biased stretch (basic and acidic residues) spans 2548 to 2564 (GNPKREGGDRRASGRRK).

It belongs to the spectrin family. As to expression, expressed in skeletal muscle at the sarcolemma and in the muscle capillaries (at protein level). Abundantly expressed in brain and pancreatic islets.

It is found in the cytoplasm. The protein localises to the cytoskeleton. Its subcellular location is the cell cortex. The sequence is that of Spectrin beta chain, non-erythrocytic 4 (SPTBN4) from Homo sapiens (Human).